The chain runs to 163 residues: Large ribosomal subunit protein uL10 (163 aa).

It belongs to the universal ribosomal protein uL10 family. Part of the ribosomal stalk of the 50S ribosomal subunit. The N-terminus interacts with L11 and the large rRNA to form the base of the stalk. The C-terminus forms an elongated spine to which L12 dimers bind in a sequential fashion forming a multimeric L10(L12)X complex.

Its function is as follows. Forms part of the ribosomal stalk, playing a central role in the interaction of the ribosome with GTP-bound translation factors. This Glaesserella parasuis serovar 5 (strain SH0165) (Haemophilus parasuis) protein is Large ribosomal subunit protein uL10.